Reading from the N-terminus, the 199-residue chain is GTP-binding protein Di-Ras2 (199 aa).

GTP-binding positions include 14–21, 33–39, 61–65, and 121–124; these read GAGGVGKS, RESYIPT, DTTGS, and NKCD. Residue Ser-35 is modified to Phosphoserine. The Effector region motif lies at 36–44; it reads YIPTVEDTY. Phosphoserine is present on Ser-126. 152–153 contributes to the GTP binding site; it reads AK. Cys-196 is modified (cysteine methyl ester). Residue Cys-196 is the site of S-geranylgeranyl cysteine attachment. A propeptide spans 197–199 (removed in mature form); sequence VIM.

The protein belongs to the small GTPase superfamily. Di-Ras family. Ubiquitinated by the ECS(ASB11) complex via 'Lys-11'-linked ubiquitin chains, leading to its degradation by the proteasome.

The protein resides in the cell membrane. The enzyme catalyses GTP + H2O = GDP + phosphate + H(+). In terms of biological role, displays low GTPase activity and exists predominantly in the GTP-bound form. This chain is GTP-binding protein Di-Ras2 (DIRAS2), found in Pongo abelii (Sumatran orangutan).